The primary structure comprises 163 residues: 2-C-methyl-D-erythritol 2,4-cyclodiphosphate synthase (163 aa).

2 residues coordinate a divalent metal cation: D15 and H17. Residues 15–17 and 41–42 contribute to the 4-CDP-2-C-methyl-D-erythritol 2-phosphate site; these read DFH and HS. H49 is an a divalent metal cation binding site. Residues 63–65 and 139–142 each bind 4-CDP-2-C-methyl-D-erythritol 2-phosphate; these read DIG and TTNE.

It belongs to the IspF family. Homotrimer. A divalent metal cation is required as a cofactor.

It catalyses the reaction 4-CDP-2-C-methyl-D-erythritol 2-phosphate = 2-C-methyl-D-erythritol 2,4-cyclic diphosphate + CMP. Its pathway is isoprenoid biosynthesis; isopentenyl diphosphate biosynthesis via DXP pathway; isopentenyl diphosphate from 1-deoxy-D-xylulose 5-phosphate: step 4/6. Involved in the biosynthesis of isopentenyl diphosphate (IPP) and dimethylallyl diphosphate (DMAPP), two major building blocks of isoprenoid compounds. Catalyzes the conversion of 4-diphosphocytidyl-2-C-methyl-D-erythritol 2-phosphate (CDP-ME2P) to 2-C-methyl-D-erythritol 2,4-cyclodiphosphate (ME-CPP) with a corresponding release of cytidine 5-monophosphate (CMP). The protein is 2-C-methyl-D-erythritol 2,4-cyclodiphosphate synthase of Gloeobacter violaceus (strain ATCC 29082 / PCC 7421).